Consider the following 114-residue polypeptide: MRLLILALLGICSLTAYIVEGVGSEVSHRRTCVSLTTQRLPVSRIKTYTITEGSLRAVIFITKRGLKVCADPQATWVRDVVRSMDRKSNTRNNMIQTKPTGTQQSTNTAVTLTG.

A signal peptide spans 1–21 (MRLLILALLGICSLTAYIVEG). Cysteine 32 and cysteine 69 are oxidised to a cystine. The interval 91–114 (RNNMIQTKPTGTQQSTNTAVTLTG) is disordered.

This sequence belongs to the intercrine gamma family.

The protein localises to the secreted. Chemotactic activity for lymphocytes but not for monocytes or neutrophils. This is Cytokine SCM-1 beta (XCL2) from Homo sapiens (Human).